Consider the following 176-residue polypeptide: Inner membrane-spanning protein YciB (176 aa).

The next 5 membrane-spanning stretches (helical) occupy residues 23–43 (MIAA…FLYW), 50–70 (TMQW…IVLG), 74–94 (FIMW…LGSH), 119–139 (LTYM…FVFT), and 150–170 (MFGS…YLST).

The protein belongs to the YciB family.

It localises to the cell inner membrane. Plays a role in cell envelope biogenesis, maintenance of cell envelope integrity and membrane homeostasis. The polypeptide is Inner membrane-spanning protein YciB (Neisseria gonorrhoeae (strain ATCC 700825 / FA 1090)).